We begin with the raw amino-acid sequence, 364 residues long: tRNA 2-selenouridine synthase (364 aa).

The 123-residue stretch at Val14–Thr136 folds into the Rhodanese domain. The active-site S-selanylcysteine intermediate is the Cys97.

Belongs to the SelU family. Monomer.

It carries out the reaction 5-methylaminomethyl-2-thiouridine(34) in tRNA + selenophosphate + (2E)-geranyl diphosphate + H2O + H(+) = 5-methylaminomethyl-2-selenouridine(34) in tRNA + (2E)-thiogeraniol + phosphate + diphosphate. The catalysed reaction is 5-methylaminomethyl-2-thiouridine(34) in tRNA + (2E)-geranyl diphosphate = 5-methylaminomethyl-S-(2E)-geranyl-thiouridine(34) in tRNA + diphosphate. The enzyme catalyses 5-methylaminomethyl-S-(2E)-geranyl-thiouridine(34) in tRNA + selenophosphate + H(+) = 5-methylaminomethyl-2-(Se-phospho)selenouridine(34) in tRNA + (2E)-thiogeraniol. It catalyses the reaction 5-methylaminomethyl-2-(Se-phospho)selenouridine(34) in tRNA + H2O = 5-methylaminomethyl-2-selenouridine(34) in tRNA + phosphate. Involved in the post-transcriptional modification of the uridine at the wobble position (U34) of tRNA(Lys), tRNA(Glu) and tRNA(Gln). Catalyzes the conversion of 2-thiouridine (S2U-RNA) to 2-selenouridine (Se2U-RNA). Acts in a two-step process involving geranylation of 2-thiouridine (S2U) to S-geranyl-2-thiouridine (geS2U) and subsequent selenation of the latter derivative to 2-selenouridine (Se2U) in the tRNA chain. The polypeptide is tRNA 2-selenouridine synthase (Sulfurovum sp. (strain NBC37-1)).